Here is a 1039-residue protein sequence, read N- to C-terminus: DIS3-like exonuclease 1 (1039 aa).

The 89-residue stretch at proline 221 to asparagine 309 folds into the CSD1 domain. The 67-residue stretch at valine 359–asparagine 425 folds into the CSD2 domain. The RNB domain occupies arginine 458–asparagine 807.

The protein belongs to the RNR ribonuclease family. Component of the RNA exosome complex. Requires Mg(2+) as cofactor.

The protein resides in the cytoplasm. It catalyses the reaction Exonucleolytic cleavage in the 3'- to 5'-direction to yield nucleoside 5'-phosphates.. In terms of biological role, catalytic component of the RNA exosome complex which has 3'-&gt;5' exoribonuclease activity and participates in a multitude of cellular RNA processing and degradation events. The protein is DIS3-like exonuclease 1 (dis3l) of Xenopus tropicalis (Western clawed frog).